We begin with the raw amino-acid sequence, 320 residues long: Small ribosomal subunit protein uS15m (320 aa).

Disordered stretches follow at residues 37–60 and 214–242; these read NISQ…AQQR and QSLE…DTGS.

It belongs to the universal ribosomal protein uS15 family. As to quaternary structure, component of the mitochondrial small ribosomal subunit (mt-SSU). Mature N.crassa 74S mitochondrial ribosomes consist of a small (37S) and a large (54S) subunit. The 37S small subunit contains a 16S ribosomal RNA (16S mt-rRNA) and 32 different proteins. The 54S large subunit contains a 23S rRNA (23S mt-rRNA) and 42 different proteins.

It localises to the mitochondrion. Functionally, component of the mitochondrial ribosome (mitoribosome), a dedicated translation machinery responsible for the synthesis of mitochondrial genome-encoded proteins, including at least some of the essential transmembrane subunits of the mitochondrial respiratory chain. The mitoribosomes are attached to the mitochondrial inner membrane and translation products are cotranslationally integrated into the membrane. This Neurospora crassa (strain ATCC 24698 / 74-OR23-1A / CBS 708.71 / DSM 1257 / FGSC 987) protein is Small ribosomal subunit protein uS15m (mrps28).